A 520-amino-acid chain; its full sequence is MATTSTTGSTLLQPLSNAVQLPIDQVNFVVCQLFALLAAIWFRTYLHSSKTSSFIRHVVATLLGLYLALFCFGWYALHFLVQSGISYCIMIIIGVENMHNYCFVFALGYLTVCQVTRVYIFDYGQYSADFSGPMMIITQKITSLACEIHDGMFRKDEELTSSQRDLAVRRMPSLLEYLSYNCNFMGILAGPLCSYKDYITFIEGRSYHITQSGENGKEETQYERTEPSPNTAVVQKLLVCGLSLLFHLTICTTLPVEYNIDEHFQATASWPTKIIYLYISLLAARPKYYFAWTLADAINNAAGFGFRGYDENGAARWDLISNLRIQQIEMSTSFKMFLDNWNIQTALWLKRVCYERTSFSPTIQTFILSAIWHGVYPGYYLTFLTGVLMTLAARAMRNNFRHYFIEPSQLKLFYDVITWIVTQVAISYTVVPFVLLSIKPSLTFYSSWYYCLHILGILVLLLLPVKKTQRRKNTHENIQLSQSKKFDEGENSLGQNSFSTTNNVCNQNQEIASRHSSLKQ.

The next 6 membrane-spanning stretches (helical) occupy residues Pro-22–Phe-42, Thr-61–Val-81, Cys-88–Gly-108, Phe-184–Gly-204, Leu-237–Glu-257, and Phe-264–Ala-284. Residues Asn-342 and His-373 contribute to the active site. The next 3 membrane-spanning stretches (helical) occupy residues Phe-366–Gly-386, Val-416–Leu-436, and Phe-444–Pro-464.

This sequence belongs to the membrane-bound acyltransferase family. As to expression, expressed in neutrophils.

Its subcellular location is the endoplasmic reticulum membrane. The enzyme catalyses a 1-acyl-sn-glycero-3-phosphocholine + an acyl-CoA = a 1,2-diacyl-sn-glycero-3-phosphocholine + CoA. It catalyses the reaction a 1-acyl-sn-glycero-3-phosphoethanolamine + an acyl-CoA = a 1,2-diacyl-sn-glycero-3-phosphoethanolamine + CoA. The catalysed reaction is a 1-acyl-sn-glycero-3-phosphate + an acyl-CoA = a 1,2-diacyl-sn-glycero-3-phosphate + CoA. It carries out the reaction (9Z)-hexadecenoyl-CoA + 1-hexadecanoyl-sn-glycero-3-phosphocholine = 1-hexadecanoyl-2-(9Z-hexadecenoyl)-sn-glycero-3-phosphocholine + CoA. The enzyme catalyses 1-hexadecanoyl-sn-glycero-3-phosphoethanolamine + (9Z)-octadecenoyl-CoA = 1-hexadecanoyl-2-(9Z-octadecenoyl)-sn-glycero-3-phosphoethanolamine + CoA. It catalyses the reaction 1-hexadecanoyl-sn-glycero-3-phosphoethanolamine + (9Z)-hexadecenoyl-CoA = 1-hexadecanoyl-2-(9Z)-hexadecenoyl-sn-glycero-3-phosphoethanolamine + CoA. The catalysed reaction is 1-(9Z-octadecenoyl)-sn-glycero-3-phospho-L-serine + hexadecanoyl-CoA = 1-(9Z)-octadecenoyl-2-hexadecanoyl-sn-glycero-3-phosphoserine + CoA. It carries out the reaction (9Z,12Z)-octadecadienoyl-CoA + 1-hexadecanoyl-sn-glycero-3-phosphocholine = 1-hexadecanoyl-2-(9Z,12Z-octadecadienoyl)-sn-glycero-3-phosphocholine + CoA. The enzyme catalyses 1-hexadecanoyl-sn-glycero-3-phosphocholine + (9Z)-octadecenoyl-CoA = 1-hexadecanoyl-2-(9Z-octadecenoyl)-sn-glycero-3-phosphocholine + CoA. It catalyses the reaction 1-hexadecanoyl-sn-glycero-3-phosphate + (9Z)-hexadecenoyl-CoA = 1-hexadecanoyl-2-[(9Z)-hexadec-9-enoyl]-sn-glycero-3-phosphate + CoA. The catalysed reaction is 1-hexadecanoyl-sn-glycero-3-phosphate + (9Z)-octadecenoyl-CoA = 1-hexadecanoyl-2-(9Z-octadecenoyl)-sn-glycero-3-phosphate + CoA. It carries out the reaction a 1-O-(1Z-alkenyl)-sn-glycero-3-phosphocholine + (9Z)-octadecenoyl-CoA = 1-O-(1Z)-alkenyl-2-(9Z)-octadecenoyl-sn-glycero-3-phosphocholine + CoA. The enzyme catalyses a 1-O-(1Z-alkenyl)-sn-glycero-3-phosphoethanolamine + (9Z)-octadecenoyl-CoA = 1-O-(1Z)-alkenyl-2-(9Z)-octadecenoyl-sn-glycero-3-phosphoethanolamine + CoA. It catalyses the reaction 1-octadecanoyl-sn-glycero-3-phosphoethanolamine + (9Z)-octadecenoyl-CoA = 1-octadecanoyl-2-(9Z-octadecenoyl)-sn-glycero-3-phosphoethanolamine + CoA. The catalysed reaction is 1-octadecanoyl-sn-glycero-3-phosphocholine + (9Z)-octadecenoyl-CoA = 1-octadecanoyl-2-(9Z-octadecenoyl)-sn-glycero-3-phosphocholine + CoA. It carries out the reaction 1-(9Z-octadecenoyl)-sn-glycero-3-phosphoethanolamine + (9Z)-octadecenoyl-CoA = 1,2-di-(9Z-octadecenoyl)-sn-glycero-3-phosphoethanolamine + CoA. It participates in lipid metabolism; phospholipid metabolism. Its activity is regulated as follows. Partially inhibited by thimerosal. In terms of biological role, acyltransferase which catalyzes the transfer of an acyl group from an acyl-CoA to a lysophospholipid leading to the production of a phospholipid and participates in the reacylation step of the phospholipid remodeling pathway also known as the Lands cycle. Catalyzes preferentially the acylation of lysophosphatidylethanolamine (1-acyl-sn-glycero-3-phosphoethanolamine or LPE) and lysophosphatidic acid (LPA) and to a lesser extend lysophosphatidylcholine (LPC) and lysophosphatidylserine (LPS). Prefers oleoyl-CoA as the acyl donor. May be involved in chondrocyte differentiation. The polypeptide is Membrane-bound glycerophospholipid O-acyltransferase 2 (Homo sapiens (Human)).